Reading from the N-terminus, the 405-residue chain is S-adenosylmethionine synthase (405 aa).

141 to 146 (GQGSVD) provides a ligand contact to ATP.

It belongs to the AdoMet synthase 2 family. Mg(2+) serves as cofactor.

It catalyses the reaction L-methionine + ATP + H2O = S-adenosyl-L-methionine + phosphate + diphosphate. Its pathway is amino-acid biosynthesis; S-adenosyl-L-methionine biosynthesis; S-adenosyl-L-methionine from L-methionine: step 1/1. Its function is as follows. Catalyzes the formation of S-adenosylmethionine from methionine and ATP. This chain is S-adenosylmethionine synthase, found in Methanococcus maripaludis (strain C5 / ATCC BAA-1333).